Reading from the N-terminus, the 358-residue chain is MFDFSIITSWIHQTLTSVMPEGLAVFIECVVIGVCIVALYAILAILLIYMERKVCGFFQCRLGPNRVGKWGSIQVLCDVLKMLTKEIIELKHSDKFLYNLAPFMVIIASFLTFSCLPISKGLEVLDFNVGVFFLLAASSIGVVGILLAGWGSNNKFSLIGAMRSGAQIISYELSVGLSILTMVVLMGTMQFSEIVESQANGWFIFKGHIPALIAFVIYLIAGNAECNRGPFDLPEAESELTAGYHTEYSGMHFGFFYLAEYLNMFIVAAVAATIFLGGWMPLHIVGLDGFNAVMDYIPGFIWFFGKAFFVVFLLMWIKWTFPRLRIDQILNLEWKYLVPISMVNLVIMVLIVVFGLHF.

Helical transmembrane passes span 30 to 50 (VVIG…LIYM), 96 to 116 (FLYN…FSCL), 129 to 149 (VGVF…LLAG), 168 to 188 (IISY…LMGT), 201 to 221 (GWFI…YLIA), 265 to 285 (FIVA…LHIV), 297 to 317 (IPGF…LMWI), and 336 to 356 (YLVP…VFGL).

The protein belongs to the complex I subunit 1 family. NDH-1 is composed of 14 different subunits. Subunits NuoA, H, J, K, L, M, N constitute the membrane sector of the complex.

It is found in the cell inner membrane. The enzyme catalyses a quinone + NADH + 5 H(+)(in) = a quinol + NAD(+) + 4 H(+)(out). Its function is as follows. NDH-1 shuttles electrons from NADH, via FMN and iron-sulfur (Fe-S) centers, to quinones in the respiratory chain. The immediate electron acceptor for the enzyme in this species is believed to be ubiquinone. Couples the redox reaction to proton translocation (for every two electrons transferred, four hydrogen ions are translocated across the cytoplasmic membrane), and thus conserves the redox energy in a proton gradient. This subunit may bind ubiquinone. In Bacteroides fragilis (strain ATCC 25285 / DSM 2151 / CCUG 4856 / JCM 11019 / LMG 10263 / NCTC 9343 / Onslow / VPI 2553 / EN-2), this protein is NADH-quinone oxidoreductase subunit H.